The chain runs to 957 residues: Glycine dehydrogenase (decarboxylating) 2 (957 aa).

The residue at position 707 (Lys-707) is an N6-(pyridoxal phosphate)lysine.

This sequence belongs to the GcvP family. As to quaternary structure, the glycine cleavage system is composed of four proteins: P, T, L and H. Pyridoxal 5'-phosphate serves as cofactor.

It carries out the reaction N(6)-[(R)-lipoyl]-L-lysyl-[glycine-cleavage complex H protein] + glycine + H(+) = N(6)-[(R)-S(8)-aminomethyldihydrolipoyl]-L-lysyl-[glycine-cleavage complex H protein] + CO2. Its function is as follows. The glycine cleavage system catalyzes the degradation of glycine. The P protein binds the alpha-amino group of glycine through its pyridoxal phosphate cofactor; CO(2) is released and the remaining methylamine moiety is then transferred to the lipoamide cofactor of the H protein. This Pseudomonas fluorescens (strain ATCC BAA-477 / NRRL B-23932 / Pf-5) protein is Glycine dehydrogenase (decarboxylating) 2.